A 697-amino-acid chain; its full sequence is Polyribonucleotide nucleotidyltransferase (697 aa).

Aspartate 488 and aspartate 494 together coordinate Mg(2+). The 60-residue stretch at 555 to 614 (PTFEVITINPDKIRDVIGKGGATIRQITEETKAAIDIEDNGTVRVFGETKAAAKAAIAKI) folds into the KH domain. One can recognise an S1 motif domain in the interval 624-692 (GKIYDGKVIR…NRGRIKLTMK (69 aa)).

Belongs to the polyribonucleotide nucleotidyltransferase family. As to quaternary structure, component of the RNA degradosome, which is a multiprotein complex involved in RNA processing and mRNA degradation. The cofactor is Mg(2+).

The protein resides in the cytoplasm. The enzyme catalyses RNA(n+1) + phosphate = RNA(n) + a ribonucleoside 5'-diphosphate. Involved in mRNA degradation. Catalyzes the phosphorolysis of single-stranded polyribonucleotides processively in the 3'- to 5'-direction. The sequence is that of Polyribonucleotide nucleotidyltransferase from Acinetobacter baumannii (strain AB307-0294).